A 273-amino-acid polypeptide reads, in one-letter code: Large ribosomal subunit protein uL2cz/uL2cy (273 aa).

Disordered regions lie at residues 1 to 22 (MAIH…DSQV) and 223 to 254 (MNPV…PALG).

Belongs to the universal ribosomal protein uL2 family. Part of the 50S ribosomal subunit.

It localises to the plastid. The protein localises to the chloroplast. In Drimys granadensis, this protein is Large ribosomal subunit protein uL2cz/uL2cy (rpl2-A).